We begin with the raw amino-acid sequence, 201 residues long: Cold shock domain-containing protein 4 (201 aa).

At Ser-2 the chain carries N-acetylserine. A CSD domain is found at 14-81; sequence RRKGTVKWFD…RPKAIEVSGP (68 aa). Positions 66 to 109 are disordered; sequence EVDNSGRPKAIEVSGPDGAPVQGNSGGGGSSGGRGGFGGGGGRG. The span at 89–109 shows a compositional bias: gly residues; sequence NSGGGGSSGGRGGFGGGGGRG. CCHC-type zinc fingers lie at residues 136–153 and 180–197; these read NSCF…ECSQ and LSCY…DCTS.

This sequence belongs to the cold shock protein (CSP) family. Mostly expressed in shoot apices and siliques, and, to a lower extent, in roots, cotyledons, stems, shoots, leaves, floral buds and flowers. Present in shoot apical meristems and siliques (at protein level). Very low levels are observed in cv. Landsberg erecta compared to cv. Columbia.

It is found in the cytoplasm. The protein resides in the nucleus. Its subcellular location is the nucleolus. In terms of biological role, chaperone that binds to and unwinds RNA and both single-stranded DNA and double-stranded DNA (ssDNA and dsDNA DNA). Regulates the flowering transition and flower and seed development, particularly at late stages of embryo development, through regulation of gene expression (including MEA, FIS2, AP1, CAL, AG and SHP2). The protein is Cold shock domain-containing protein 4 (CSP4) of Arabidopsis thaliana (Mouse-ear cress).